A 306-amino-acid chain; its full sequence is tRNA-cytidine(32) 2-sulfurtransferase (306 aa).

The short motif at 49 to 54 is the PP-loop motif element; sequence SGGKDS. Residues cysteine 124, cysteine 127, and cysteine 215 each coordinate [4Fe-4S] cluster.

This sequence belongs to the TtcA family. Homodimer. It depends on Mg(2+) as a cofactor. The cofactor is [4Fe-4S] cluster.

The protein resides in the cytoplasm. The enzyme catalyses cytidine(32) in tRNA + S-sulfanyl-L-cysteinyl-[cysteine desulfurase] + AH2 + ATP = 2-thiocytidine(32) in tRNA + L-cysteinyl-[cysteine desulfurase] + A + AMP + diphosphate + H(+). It participates in tRNA modification. Its function is as follows. Catalyzes the ATP-dependent 2-thiolation of cytidine in position 32 of tRNA, to form 2-thiocytidine (s(2)C32). The sulfur atoms are provided by the cysteine/cysteine desulfurase (IscS) system. The polypeptide is tRNA-cytidine(32) 2-sulfurtransferase (Azoarcus sp. (strain BH72)).